A 682-amino-acid chain; its full sequence is Activating transcription factor 7-interacting protein 2 (682 aa).

The segment at 120–148 (SRTTESPSRVFTEEAKDSLNTSENDSEHQ) is disordered. Residues 137–148 (SLNTSENDSEHQ) are compositionally biased toward polar residues. The stretch at 328-378 (EIYSINYELFDKKLKELNQRIGKTECRNKHEGIADKLLAKIAKLQRRIKTV) forms a coiled coil. Serine 416 carries the phosphoserine modification. 2 stretches are compositionally biased toward polar residues: residues 418–451 (IEKS…VSES) and 462–490 (ESPN…NSPN). 2 disordered regions span residues 418–491 (IEKS…SPNA) and 513–538 (NCNT…ETTP). A phosphoserine mark is found at serine 488 and serine 521. Positions 528-538 (KAASNSKETTP) are enriched in polar residues. Residues 575–680 (PPQKPELKVK…IKSIPGFSEN (106 aa)) form the Fibronectin type-III domain.

The protein belongs to the MCAF family. As to quaternary structure, interacts with MBD1, SETDB1 and SP1. Probably forms a complex with SETDB1 and MBD1.

It is found in the nucleus. Its function is as follows. Recruiter that couples transcriptional factors to general transcription apparatus and thereby modulates transcription regulation and chromatin formation. Can both act as an activator or a repressor depending on the context. Mediates MBD1-dependent transcriptional repression, probably by recruiting complexes containing SETDB1. The complex formed with MBD1 and SETDB1 represses transcription and probably couples DNA methylation and histone H3 'Lys-9' trimethylation (H3K9me3) activity. The chain is Activating transcription factor 7-interacting protein 2 (ATF7IP2) from Homo sapiens (Human).